A 570-amino-acid polypeptide reads, in one-letter code: nebramycin 5' synthase (570 aa).

The segment at M1–G354 is kae1-like. D12 serves as a coordination point for tobramycin. The active-site Proton acceptor is the H14. K39 is a binding site for ATP. Fe cation contacts are provided by H114, H118, and D137. Carbamoyl adenylate contacts are provided by Q139, G168, and E172. E172 and D228 together coordinate tobramycin. 2 residues coordinate carbamoyl adenylate: G310 and N314. A Fe cation-binding site is contributed by D338. Residues G367 to H570 are yrdC-like. The ATP site is built by R418 and R449. Position 418–419 (R418–A419) interacts with carbamoyl phosphate. Carbamoyl phosphate is bound by residues R498 and N528–S530.

It belongs to the NodU/CmcH family. Fe(2+) serves as cofactor.

The catalysed reaction is tobramycin + carbamoyl phosphate + ATP + H2O = nebramycin 5' + AMP + phosphate + diphosphate + H(+). The enzyme catalyses kanamycin A + carbamoyl phosphate + ATP + H2O = 6''-O-carbamoylkanamycin A + AMP + phosphate + diphosphate + H(+). It catalyses the reaction carbamoyl phosphate + ATP + H2O = carbamoyl adenylate + phosphate + diphosphate. It carries out the reaction tobramycin + carbamoyl adenylate = nebramycin 5' + AMP + H(+). The catalysed reaction is carbamoyl adenylate + kanamycin A = 6''-O-carbamoylkanamycin A + AMP + H(+). The protein operates within antibiotic biosynthesis; kanamycin biosynthesis. It functions in the pathway antibiotic biosynthesis; tobramycin biosynthesis. With respect to regulation, ADP inhibits the formation of nebramycin 5'. In terms of biological role, tobZ is involved in the biosynthesis of the 2-deoxystreptamine-containing aminoglycoside antibiotics such as nebramycin 5 and 6-O-carbamoylkanamycin. Catalyzes the hydrolysis of carbamoyl phosphate and its subsequent adenylation by ATP to yield O-carbamoyladenylate. Then it catalyzes the transfer of the carbamoyl moiety from O-carbamoyladenylate to the tobramycin 6-hydroxy group to yield nebramycin 5'. It catalyzes the same reaction with kanamycin A. These reactions are considerably slower in the presence of deoxy-ATP. The chain is nebramycin 5' synthase (tobZ) from Streptoalloteichus tenebrarius (strain ATCC 17920 / DSM 40477 / JCM 4838 / CBS 697.72 / NBRC 16177 / NCIMB 11028 / NRRL B-12390 / A12253. 1 / ISP 5477) (Streptomyces tenebrarius).